The sequence spans 275 residues: Putative phosphoenolpyruvate synthase regulatory protein (275 aa).

153–160 (GVSRTGKT) contributes to the ADP binding site.

The protein belongs to the pyruvate, phosphate/water dikinase regulatory protein family. PSRP subfamily.

The enzyme catalyses [pyruvate, water dikinase] + ADP = [pyruvate, water dikinase]-phosphate + AMP + H(+). It catalyses the reaction [pyruvate, water dikinase]-phosphate + phosphate + H(+) = [pyruvate, water dikinase] + diphosphate. In terms of biological role, bifunctional serine/threonine kinase and phosphorylase involved in the regulation of the phosphoenolpyruvate synthase (PEPS) by catalyzing its phosphorylation/dephosphorylation. The protein is Putative phosphoenolpyruvate synthase regulatory protein of Nitrosomonas europaea (strain ATCC 19718 / CIP 103999 / KCTC 2705 / NBRC 14298).